Here is a 139-residue protein sequence, read N- to C-terminus: 6,7-dimethyl-8-ribityllumazine synthase (139 aa).

Residues Phe11, 42–44, and 66–68 each bind 5-amino-6-(D-ribitylamino)uracil; these read ALE and VVI. 71–72 provides a ligand contact to (2S)-2-hydroxy-3-oxobutyl phosphate; it reads ET. His74 serves as the catalytic Proton donor. Asn98 is a 5-amino-6-(D-ribitylamino)uracil binding site. Residue Arg112 participates in (2S)-2-hydroxy-3-oxobutyl phosphate binding.

This sequence belongs to the DMRL synthase family.

It catalyses the reaction (2S)-2-hydroxy-3-oxobutyl phosphate + 5-amino-6-(D-ribitylamino)uracil = 6,7-dimethyl-8-(1-D-ribityl)lumazine + phosphate + 2 H2O + H(+). The protein operates within cofactor biosynthesis; riboflavin biosynthesis; riboflavin from 2-hydroxy-3-oxobutyl phosphate and 5-amino-6-(D-ribitylamino)uracil: step 1/2. In terms of biological role, catalyzes the formation of 6,7-dimethyl-8-ribityllumazine by condensation of 5-amino-6-(D-ribitylamino)uracil with 3,4-dihydroxy-2-butanone 4-phosphate. This is the penultimate step in the biosynthesis of riboflavin. The protein is 6,7-dimethyl-8-ribityllumazine synthase of Zymomonas mobilis subsp. mobilis (strain ATCC 31821 / ZM4 / CP4).